We begin with the raw amino-acid sequence, 228 residues long: Immunogenic protein MPB64 (228 aa).

A signal peptide spans 1 to 23 (MRIKIFMLVTAVVLLCCSGVATA).

It belongs to the RsiV family.

It localises to the secreted. The polypeptide is Immunogenic protein MPB64 (mpb64) (Mycobacterium bovis (strain ATCC BAA-935 / AF2122/97)).